A 109-amino-acid chain; its full sequence is T cell receptor alpha variable 26-2 (109 aa).

Residues 1–19 (MKLVTSITVLLSLGIMGDA) form the signal peptide. The region spanning 20–109 (KTTQPNSMES…AAVYYCILRD (90 aa)) is the Ig-like domain. The cysteines at positions 39 and 105 are disulfide-linked. An N-linked (GlcNAc...) asparagine glycan is attached at N40.

Alpha-beta TR is a heterodimer composed of an alpha and beta chain; disulfide-linked. The alpha-beta TR is associated with the transmembrane signaling CD3 coreceptor proteins to form the TR-CD3 (TcR or TCR). The assembly of alpha-beta TR heterodimers with CD3 occurs in the endoplasmic reticulum where a single alpha-beta TR heterodimer associates with one CD3D-CD3E heterodimer, one CD3G-CD3E heterodimer and one CD247 homodimer forming a stable octameric structure. CD3D-CD3E and CD3G-CD3E heterodimers preferentially associate with TR alpha and TR beta chains, respectively. The association of the CD247 homodimer is the last step of TcR assembly in the endoplasmic reticulum and is required for transport to the cell surface.

The protein resides in the cell membrane. V region of the variable domain of T cell receptor (TR) alpha chain that participates in the antigen recognition. Alpha-beta T cell receptors are antigen specific receptors which are essential to the immune response and are present on the cell surface of T lymphocytes. Recognize peptide-major histocompatibility (MH) (pMH) complexes that are displayed by antigen presenting cells (APC), a prerequisite for efficient T cell adaptive immunity against pathogens. Binding of alpha-beta TR to pMH complex initiates TR-CD3 clustering on the cell surface and intracellular activation of LCK that phosphorylates the ITAM motifs of CD3G, CD3D, CD3E and CD247 enabling the recruitment of ZAP70. In turn ZAP70 phosphorylates LAT, which recruits numerous signaling molecules to form the LAT signalosome. The LAT signalosome propagates signal branching to three major signaling pathways, the calcium, the mitogen-activated protein kinase (MAPK) kinase and the nuclear factor NF-kappa-B (NF-kB) pathways, leading to the mobilization of transcription factors that are critical for gene expression and essential for T cell growth and differentiation. The T cell repertoire is generated in the thymus, by V-(D)-J rearrangement. This repertoire is then shaped by intrathymic selection events to generate a peripheral T cell pool of self-MH restricted, non-autoaggressive T cells. Post-thymic interaction of alpha-beta TR with the pMH complexes shapes TR structural and functional avidity. The chain is T cell receptor alpha variable 26-2 from Homo sapiens (Human).